The sequence spans 282 residues: Energy-coupling factor transporter ATP-binding protein EcfA2 (282 aa).

The 234-residue stretch at 1-234 folds into the ABC transporter domain; sequence MKGSPFEKVA…ADELVALGLD (234 aa). Residue 28-35 participates in ATP binding; that stretch reads GHTGSGKS.

It belongs to the ABC transporter superfamily. Energy-coupling factor EcfA family. As to quaternary structure, forms a stable energy-coupling factor (ECF) transporter complex composed of 2 membrane-embedded substrate-binding proteins (S component), 2 ATP-binding proteins (A component) and 2 transmembrane proteins (T component).

The protein resides in the cell membrane. Functionally, ATP-binding (A) component of a common energy-coupling factor (ECF) ABC-transporter complex. Unlike classic ABC transporters this ECF transporter provides the energy necessary to transport a number of different substrates. The sequence is that of Energy-coupling factor transporter ATP-binding protein EcfA2 from Halalkalibacterium halodurans (strain ATCC BAA-125 / DSM 18197 / FERM 7344 / JCM 9153 / C-125) (Bacillus halodurans).